The primary structure comprises 2572 residues: MSPFMEPQDEIMPIAVVGMSFRGPGDATNVENLLKMVAEGRESRSKIPKHKWNHEAFYHPDPSRYGSHNVEYGHWFQQDVTRFDAPFFNMTAAEAAALDPQQRMLLECTYEAMENSGTHMPNFVGTETSVFVGSFCTDYADVLWRDPETVPMYQCTNAGHSRANTANRISYSYDLKGPSVTVDTACSASLVALHLGCQSLLTGDAKQAIVAGSSAILSHEGMVTMSMMRLLSHEGRCYTFDERANGYARGDGVGVIFLKPLQDAVEAGDTIRAVIRGTGSNQDGKTPGITMPNGLAQEALIRHVYDRSGLDPLDTSYVECHGTGTQAGDTTETGALSRVFSPGRDEDDPLTIGSVKTNVGHLEGASGVTGVIKTILMLENSIILPNRNFQKANPRIPLKDWKLRVPIAIEPWSRPKPLRASVNSFGYGGANAHVIIESARDYLLSHGYDPSQAIRKSSLAVAPIQRAIAQCGPTRSGDDGIENGLSKSVNGNINGVNGIDAHEEDRARVFTLSAFDQAAGKGWVAALTEYLKQRRHIADEAFLDSLTYTLNERRTIHPWKATVIARSVDDLCVRLEGVHFVNVNPKQNLGFVFTGQGAQWCGMGKELIAIYPRFRKSLVACAAALERLGAPFDLLAEFEKDSKDSQINRALYSQPLCTALQIALVDLLGSWGIRPASVTGHSSGEIASAYTAGALSIEDAMLVSYSRGVASNDLASKGLTDGSMVAVGMSKEEALPILSSLSSGKAGVACSNSPSSITVSGDRAAIEELQAILEEKKIFNRKLVVEVAYHSHHMALVADQYRIAMSNIEVLKGNGIKFFSSVTGEQADISTLGPDYWVSNMVGEVKFNQSLHRLSSESGASTTASRKRNKLSPVHTLVEIGPHSALAGPIKQILQADDKLAKASIDYHTALARKKDAVESVLGLVSGLFVSGYSVDLSGINKLTMTKCSPLIDLPPYSWNHANSYSAESRISKFYRDRTFPRVDLLGVLERNSSSLEPRWRNHIRLSEIPWVHDHKIQSNIVYPAAGYITMAVEAAYQRAVQRSVTKIIGYRLREVVIGSALVVPENLGEVEVAITLKSFSESVKTPSDLWDEFVISSVTSDSRWTEHCRGLISVQTPQKSSNLVDGPAQEEADKKLYAELIKKYENNCRKEIDVSQFYDELTALGLEYGPTFANLRHLRSAPGECIGKIEIPDTAAVMPMQFQYPFVIHPATFDSFLHTIFVALAAQLGNLNDPAVPVSVDEVFIAHDISKKPGDVLNTYTSTSQKDYRYMSASIAVFGGTHEPANKPVVEIHDLTCATLERDGGGEADDEVPSRAYNLKWGPDVDLLSVDQLTKMCAAPPPPNAAFIRSKLERAAFYYLHSAVAAMSKASTPSAESDEYRQTLRGFLSSQVEFAMTKHHDHGWSSASESEKASLIEEVRASSGVGRTLCYAGEQLAKVVAGESSPSDLVQGLDFNAFVEDPHLFQNTRSAATYLDLVGHKNPNLSILTIGPQSGLASLGLLSLLSELEGSTPRFTAFHHTDSELNITDTVKEKFSAWANLIEFKDLAIHSDQSEENEVYDVVVAFHVLGSSNSLPETFSSSRRLLKPGGKLLLVGRALKSLVATVLWGSLPNVLSNQKHNEEISTSNVENLIQGSGFSISAALSSSTNKTNYGALFLSLVDEKPRKTHEKKALIIAEKDITGATLEQLRSQLSQSCIEVDVVSLQDARPTSQQACIILSEISSKVLADPSKSEWEAIKRLSLQSAGMIWVTNGAGSSLNPEANMAAGLLRTIRSETGDKPIITLDLEDLDGSVEYIMALFRHVFQSAVSPGEIDAEYTERSGILNIPRLVEDAQLTKHIGTSLQSKAAEIQPFDQPGRPLRMYVGTPGLLDTLHFTEDDRLEEDLPDDWVEMQIKASGINFKDVMMAMGQIKVENLGWECSGILTAVGKHVKGLKIGDRVVCHGSGTFATHSRGPAANAMKIPDNVTFETAAALPVTYVTAYHSIHNVARLQPGETILVHAATGGLGQAIVELCKLVGAEIFVTVGTPEKKRFVQEHFHIPEDHILWSRDNSFAKAVKRLTNGKGVDVVMNSLAGELLRLSWECIAPYGRFVELGQRDITVNSRLEMSHFARNASFTAFNLAYMVQYNPEVANDVFARVLHLFAQGAVKGPSPVEVYPFSQMEAAFRRMQTGGHMGKLVAVSRPGDMVKVIAQDKSKNMFRPDASYLLVGGLGGIGRATSQWMVQHGAKNIIFVNRSGLKTDEAKETVRVLDEAGCATTVFSCDITDAPSVEAFAEEAARSLPPIRGVIQGAMLLRDTMFEKMTLDDYRTVIRPKVHGTWNLHNFLPKDMDFFVMESSVSGIIGNTAQAAYAAGNTFLDAFASYRNSLGLPATTLDLGAISGVGYLAKNDELKQAMERQGFEFTDEKRLMRLIQFAIQNPRREGNLSHVITGLGTWQESNSLGALNTPMFSHFRRLASSGASSDNSANNLRKVLKESKTFDAASEAICDALVDKIASRSGLPIENVSTAKSMPDYGIDSLVAVELRNWIAKEMDSTIPILELMASDPLTGLAAKIAKRSRLVNVESGEDA.

One can recognise a Ketosynthase family 3 (KS3) domain in the interval 11–438; it reads IMPIAVVGMS…GANAHVIIES (428 aa). Residues Cys186, His321, and His361 each act as for beta-ketoacyl synthase activity in the active site. Residues 591–917 form the Malonyl-CoA:ACP transacylase (MAT) domain; sequence FVFTGQGAQW…HTALARKKDA (327 aa). An N-terminal hotdog fold region spans residues 983 to 1120; that stretch reads VDLLGVLERN…GLISVQTPQK (138 aa). Positions 983–1307 constitute a PKS/mFAS DH domain; the sequence is VDLLGVLERN…CATLERDGGG (325 aa). The active-site Proton acceptor; for dehydratase activity is His1015. Residues 1150–1307 are C-terminal hotdog fold; sequence RKEIDVSQFY…CATLERDGGG (158 aa). The active-site Proton donor; for dehydratase activity is Asp1215. A methyltransferase (CMeT) domain region spans residues 1353-1654; it reads LERAAFYYLH…LSSSTNKTNY (302 aa). The region spanning 1870-2182 is the Enoyl reductase (ER) domain; sequence GLLDTLHFTE…TGGHMGKLVA (313 aa). One can recognise a Ketoreductase (KR) domain in the interval 2206-2383; it reads ASYLLVGGLG…ATTLDLGAIS (178 aa). The Carrier domain maps to 2484-2561; that stretch reads AASEAICDAL…GLAAKIAKRS (78 aa). Ser2521 bears the O-(pantetheine 4'-phosphoryl)serine mark.

Pantetheine 4'-phosphate serves as cofactor.

It functions in the pathway secondary metabolite biosynthesis. Highly reducing polyketide synthase; part of the gene cluster that mediates the biosynthesis of the antihypercholesterolemic agents phomoidrides which are dimeric anhydrides. The pathway begins with the highly reducing polyketide synthase phiA that catalyzes the formation of a C12-fatty acyl-ACP, starting from one acetate and 5 malonate units. The hydrolase phiM is involved in the release of the C12-fatty acyl chain from phiA. The alkylcitrate synthase (ACS) phiJ and the alkylcitrate dehydratase (ACDH) phiI then give rise to decarboxylated monomeric anhydrides by coupling the C12-fatty acyl chain with oxalacetic acid. The cyclase phiC is responsible for the dimerization of the monomeric anhydrides which leads to the production of prephomoidride that contains the characteristic bicyclo[4.3.1]deca-1,6-diene system of phomoidrides. Iterative oxidation catalyzed by the alpha-ketoglutarate-dependent dioxygenase phiK produced then phomoidride A. Finally, the methyltransferase phiE converts phomoidride A to phomoidride B via an acetalization reaction. The phosphatidylethanolamine-binding protein phiB and phiN are not essential for dimerization and their functions have still to be determined. The sequence is that of Highly reducing polyketide synthase phiA from Fungal sp. (strain ATCC 74256).